Consider the following 550-residue polypeptide: Sterol O-acyltransferase 1 (550 aa).

N-acetylmethionine is present on M1. The segment at 1-36 (MVGEEKMSLRNRLSKSRENPEEDEDQRKPAKESLEA) is disordered. Residues 1–138 (MVGEEKMSLR…LDELLEVDHI (138 aa)) lie on the Cytoplasmic side of the membrane. S8 bears the Phosphoserine mark. Positions 15-34 (KSRENPEEDEDQRKPAKESL) are enriched in basic and acidic residues. H137 serves as a coordination point for cholesterol. Residues 139 to 160 (RTIYHMFIALLILFILSTLVVD) form a helical membrane-spanning segment. Over 161 to 180 (YIDEGRLVLEFSLLSYAFGK) the chain is Lumenal. Residues 181-206 (FPTVVWTWWIMFLSTFSVPYFLFQRW) traverse the membrane as a helical segment. The Cytoplasmic portion of the chain corresponds to 207 to 218 (ATGYSKSSHPLI). A helical transmembrane segment spans residues 219 to 244 (NSLFHGFLFMVFQIGILGFGPTYVVL). At 245–252 (AYTLPPAS) the chain is on the lumenal side. A helical transmembrane segment spans residues 253–276 (RFIIIFEQIRFVMKAHSFVRENVP). The Cytoplasmic portion of the chain corresponds to 277–319 (RVLNSAKEKSSTVPIPTVNQYLYFLFAPTLIYRDSYPRNPTVR). The helical transmembrane segment at 320-352 (WGYVAMQFAQVFGCFFYVYYIFERLCAPLFRNI) threads the bilayer. Residues 353 to 369 (KQEPFSARVLVLCVFNS) are Lumenal-facing. Residues 370–395 (ILPGVLILFLTFFAFLHCWLNAFAEM) traverse the membrane as a helical segment. Residues 396 to 443 (LRFGDRMFYKDWWNSTSYSNYYRTWNVVVHDWLYYYAYKDFLWFFSKR) lie on the Cytoplasmic side of the membrane. An FYXDWWN motif motif is present at residues 403-409 (FYKDWWN). An acyl-CoA contacts are provided by N415, R418, N421, H425, Y433, K445, and S456. A helical transmembrane segment spans residues 444–468 (FKSAAMLAVFAVSAVVHEYALAVCL). Residue H460 is part of the active site. Over 469 to 474 (SFFYPV) the chain is Lumenal. A helical transmembrane segment spans residues 475 to 490 (LFVLFMFFGMAFNFIV). Over 491-496 (NDSRKK) the chain is Cytoplasmic. The helical transmembrane segment at 497-528 (PIWNVMMWTSLFLGNGVLLCFYSQEWYARQHC) threads the bilayer. A disulfide bridge links C528 with C546. Residues 529–550 (PLKNPTFLDYVRPRSWTCRYVF) lie on the Lumenal side of the membrane.

Belongs to the membrane-bound acyltransferase family. Sterol o-acyltransferase subfamily. In terms of assembly, may form homo- or heterodimers. Interacts with UBIAD1. In terms of tissue distribution, expressed in most tissues, but most strongly in the adrenal gland. Expressed more strongly in liver Kupffer cells than in hepatocytes.

The protein localises to the endoplasmic reticulum membrane. The enzyme catalyses a sterol + a long-chain fatty acyl-CoA = a long-chain 3-hydroxysterol ester + CoA. It catalyses the reaction cholesterol + an acyl-CoA = a cholesterol ester + CoA. The catalysed reaction is cholesterol + (9Z)-octadecenoyl-CoA = cholesteryl (9Z-octadecenoate) + CoA. It carries out the reaction cholesterol + hexadecanoyl-CoA = cholesteryl hexadecanoate + CoA. The enzyme catalyses octadecanoyl-CoA + cholesterol = cholesteryl octadecanoate + CoA. It catalyses the reaction (9Z,12Z)-octadecadienoyl-CoA + cholesterol = cholesteryl (9Z,12Z)-octadecadienoate + CoA. The catalysed reaction is (5Z,8Z,11Z,14Z)-eicosatetraenoyl-CoA + cholesterol = cholesteryl (5Z,8Z,11Z,14Z)-eicosatetraenoate + CoA. It carries out the reaction (9Z)-hexadecenoyl-CoA + cholesterol = cholesteryl (9Z)-hexadecenoate + CoA. The enzyme catalyses (11Z)-octadecenoyl-CoA + cholesterol = cholesteryl (11Z)-octadecenoate + CoA. It catalyses the reaction (7Z)-octadecenoyl-CoA + cholesterol = cholesteryl (7Z)-octadecenoate + CoA. Functionally, catalyzes the formation of fatty acid-cholesterol esters, which are less soluble in membranes than cholesterol. Plays a role in lipoprotein assembly and dietary cholesterol absorption. Preferentially utilizes oleoyl-CoA ((9Z)-octadecenoyl-CoA) as a substrate: shows a higher activity towards an acyl-CoA substrate with a double bond at the delta-9 position (9Z) than towards saturated acyl-CoA or an unsaturated acyl-CoA with a double bond at the delta-7 (7Z) or delta-11 (11Z) positions. This is Sterol O-acyltransferase 1 (SOAT1) from Chlorocebus aethiops (Green monkey).